A 63-amino-acid polypeptide reads, in one-letter code: Sperm protamine P1 (63 aa).

A disordered region spans residues 1-63 (MARYRRHSRS…RYSRRGRRRY (63 aa)).

The protein belongs to the protamine P1 family. Testis.

The protein resides in the nucleus. It is found in the chromosome. Functionally, protamines substitute for histones in the chromatin of sperm during the haploid phase of spermatogenesis. They compact sperm DNA into a highly condensed, stable and inactive complex. This Phascogale tapoatafa (Common wambenger) protein is Sperm protamine P1 (PRM1).